The chain runs to 353 residues: tRNA N6-adenosine threonylcarbamoyltransferase (353 aa).

His111 and His115 together coordinate Fe cation. Residues Leu148–Gly152, Asp181, Gly194, and Asn286 contribute to the substrate site. Asp314 is a Fe cation binding site.

Belongs to the KAE1 / TsaD family. Requires Fe(2+) as cofactor.

It localises to the cytoplasm. It catalyses the reaction L-threonylcarbamoyladenylate + adenosine(37) in tRNA = N(6)-L-threonylcarbamoyladenosine(37) in tRNA + AMP + H(+). Functionally, required for the formation of a threonylcarbamoyl group on adenosine at position 37 (t(6)A37) in tRNAs that read codons beginning with adenine. Is involved in the transfer of the threonylcarbamoyl moiety of threonylcarbamoyl-AMP (TC-AMP) to the N6 group of A37, together with TsaE and TsaB. TsaD likely plays a direct catalytic role in this reaction. This chain is tRNA N6-adenosine threonylcarbamoyltransferase, found in Blochmanniella floridana.